Consider the following 98-residue polypeptide: Plastocyanin (98 aa).

One can recognise a Plastocyanin-like domain in the interval 1–98; that stretch reads AQIVKLGGDD…AGMKMTITVQ (98 aa). Positions 38, 83, 86, and 91 each coordinate Cu(2+).

It belongs to the plastocyanin family. Cu(2+) is required as a cofactor.

The protein resides in the plastid. The protein localises to the chloroplast thylakoid membrane. Participates in electron transfer between P700 and the cytochrome b6-f complex in photosystem I. Has antiviral activity against Potato virus Y (strain N). The protein is Plastocyanin (PETE) of Ulva pertusa (Sea lettuce).